The following is a 385-amino-acid chain: HAT1-interacting factor 1 (385 aa).

An important for interaction with heterotetrameric histone H3 and H4 and for interaction with dimeric histone H2A and H2B region spans residues 80 to 199 (GNLFGDALLA…RKSGFHIYFE (120 aa)). Composition is skewed to low complexity over residues 85–97 (DALLAGDDGSGSE) and 105–116 (DVSNGEEGNENG). A disordered region spans residues 85 to 163 (DALLAGDDGS…EEENVEKEEE (79 aa)). Positions 129-160 (DQEEEDLTGDVDSGDSEDSGEGSEEEEENVEK) are enriched in acidic residues. The residue at position 174 (Ser174) is a Phosphoserine. 3 TPR repeats span residues 186 to 220 (VSQLRKSGFHIYFENDLYENALDLLAQALMLLGRP), 229 to 262 (ENSRLRIGDVYILMGDIEREAEMFSRAIHHYLKA), and 289 to 322 (ALRWVDQVPAKDKLKRFKHAKALLEKHMTTRPKD). The interaction with dimeric histone H2A and H2B stretch occupies residues 248-332 (EAEMFSRAIH…SELQQARLAQ (85 aa)). Positions 340 to 385 (VQENQQHGSKRPLSQPTTSIGFPALEKPLGDFNDLSQLVKKKPRRH) are disordered. The span at 342–359 (ENQQHGSKRPLSQPTTSI) shows a compositional bias: polar residues.

Belongs to the NASP family. In terms of assembly, homodimer. The homodimer interacts with a histone tetramer containing H3 and H4; the interaction is direct. The homodimer interacts with heterodimeric histone H2A and H2B; the interaction is direct. Component of the nuclear histone acetyltransferase B (HAT-B) complex composed of at least HAT1, HAT2 and HIF1. Does not interact with HAT1 in the absence of HAT2. Interacts with histones H3 and H4 in a HAT1/HAT2 dependent manner. Interaction with heterotetrameric histone H3 and H4 precludes interaction with dimeric histone H2A and H2B, irrespective of the fact that their binding involves non-identical regions of the protein.

Its subcellular location is the nucleus. In terms of biological role, histone H3 and H4 specific chaperone component of the nuclear histone acetyltransferase B (HAT-B) complex. Involved in chromatin assembly and telomere silencing. This is HAT1-interacting factor 1 (HIF1) from Saccharomyces cerevisiae (strain ATCC 204508 / S288c) (Baker's yeast).